The following is a 376-amino-acid chain: Glutamate 5-kinase (376 aa).

Lys-15 lines the ATP pocket. Positions 55, 141, and 153 each coordinate substrate. ATP contacts are provided by residues 173–174 and 215–221; these read SD and TGGMQTK. The PUA domain occupies 280 to 361; it reads AGRLTVDAGA…HAIAEVLDEA (82 aa).

The protein belongs to the glutamate 5-kinase family.

The protein localises to the cytoplasm. It carries out the reaction L-glutamate + ATP = L-glutamyl 5-phosphate + ADP. The protein operates within amino-acid biosynthesis; L-proline biosynthesis; L-glutamate 5-semialdehyde from L-glutamate: step 1/2. Functionally, catalyzes the transfer of a phosphate group to glutamate to form L-glutamate 5-phosphate. This is Glutamate 5-kinase from Salinibacter ruber (strain DSM 13855 / M31).